The chain runs to 143 residues: MAKKIEGYIKLQVAAGDAKPAPPIGPALGQRGVNIMEFCKQFNAATQEIEKGTPLPTVITVYADRSFTFVTKTPPATFFIKKAVGIKSGSKTPGKASAGTIKRSQLAEIAQAKMKDLNANDIDAATKIIEGSARAMGLTVVEG.

Belongs to the universal ribosomal protein uL11 family. In terms of assembly, part of the ribosomal stalk of the 50S ribosomal subunit. Interacts with L10 and the large rRNA to form the base of the stalk. L10 forms an elongated spine to which L12 dimers bind in a sequential fashion forming a multimeric L10(L12)X complex. Post-translationally, one or more lysine residues are methylated.

Forms part of the ribosomal stalk which helps the ribosome interact with GTP-bound translation factors. The polypeptide is Large ribosomal subunit protein uL11 (Novosphingobium aromaticivorans (strain ATCC 700278 / DSM 12444 / CCUG 56034 / CIP 105152 / NBRC 16084 / F199)).